The following is a 122-amino-acid chain: Large ribosomal subunit protein uL18 (122 aa).

The protein belongs to the universal ribosomal protein uL18 family. As to quaternary structure, part of the 50S ribosomal subunit; part of the 5S rRNA/L5/L18/L25 subcomplex. Contacts the 5S and 23S rRNAs.

Functionally, this is one of the proteins that bind and probably mediate the attachment of the 5S RNA into the large ribosomal subunit, where it forms part of the central protuberance. In Mycobacterium avium (strain 104), this protein is Large ribosomal subunit protein uL18.